The sequence spans 374 residues: Chaperone protein DnaJ (374 aa).

Positions 5 to 70 (DYYKLLGVDR…EKRAGYDRYG (66 aa)) constitute a J domain. A CR-type zinc finger spans residues 136 to 214 (GIQAPIHYVT…CNGSGRRRDE (79 aa)). The Zn(2+) site is built by C149, C152, C166, C169, C188, C191, C202, and C205. CXXCXGXG motif repeat units follow at residues 149–156 (CDMCQGRG), 166–173 (CHTCQGSG), 188–195 (CTTCYGEG), and 202–209 (CKKCNGSG).

Belongs to the DnaJ family. As to quaternary structure, homodimer. The cofactor is Zn(2+).

Its subcellular location is the cytoplasm. Its function is as follows. Participates actively in the response to hyperosmotic and heat shock by preventing the aggregation of stress-denatured proteins and by disaggregating proteins, also in an autonomous, DnaK-independent fashion. Unfolded proteins bind initially to DnaJ; upon interaction with the DnaJ-bound protein, DnaK hydrolyzes its bound ATP, resulting in the formation of a stable complex. GrpE releases ADP from DnaK; ATP binding to DnaK triggers the release of the substrate protein, thus completing the reaction cycle. Several rounds of ATP-dependent interactions between DnaJ, DnaK and GrpE are required for fully efficient folding. Also involved, together with DnaK and GrpE, in the DNA replication of plasmids through activation of initiation proteins. This chain is Chaperone protein DnaJ, found in Wolbachia sp. subsp. Brugia malayi (strain TRS).